Reading from the N-terminus, the 229-residue chain is Phosphatidylinositol N-acetylglucosaminyltransferase subunit GPI15 (229 aa).

2 helical membrane-spanning segments follow: residues Ile-59–Leu-79 and Ile-101–Val-121.

The protein belongs to the PIGH family. In terms of assembly, component of the phosphatidylinositol N-acetylglucosaminyltransferase (GPI-GlcNAc transferase) complex composed of at least GPI1, GPI2, GPI3, GPI15, GPI19 and ERI1.

It localises to the membrane. The catalysed reaction is a 1,2-diacyl-sn-glycero-3-phospho-(1D-myo-inositol) + UDP-N-acetyl-alpha-D-glucosamine = a 6-(N-acetyl-alpha-D-glucosaminyl)-1-(1,2-diacyl-sn-glycero-3-phospho)-1D-myo-inositol + UDP + H(+). Its pathway is glycolipid biosynthesis; glycosylphosphatidylinositol-anchor biosynthesis. Its function is as follows. Part of the complex catalyzing the transfer of N-acetylglucosamine from UDP-N-acetylglucosamine to phosphatidylinositol, the first step of GPI biosynthesis. This is Phosphatidylinositol N-acetylglucosaminyltransferase subunit GPI15 (GPI15) from Saccharomyces cerevisiae (strain ATCC 204508 / S288c) (Baker's yeast).